The sequence spans 28 residues: Flagellar filament 34 kDa core protein (28 aa).

Belongs to the bacterial flagellin family. The flagellum consists of an outer layer composed of repeating units of FlaA around a core that contains several antigenically related polypeptides.

It is found in the periplasmic flagellum. The protein resides in the periplasm. In terms of biological role, component of the core of the flagella. The polypeptide is Flagellar filament 34 kDa core protein (Treponema phagedenis).